The primary structure comprises 219 residues: Protein-L-isoaspartate O-methyltransferase 2 (219 aa).

The active site involves S67.

This sequence belongs to the methyltransferase superfamily. L-isoaspartyl/D-aspartyl protein methyltransferase family.

It is found in the cytoplasm. It catalyses the reaction [protein]-L-isoaspartate + S-adenosyl-L-methionine = [protein]-L-isoaspartate alpha-methyl ester + S-adenosyl-L-homocysteine. Its function is as follows. Catalyzes the methyl esterification of L-isoaspartyl residues in peptides and proteins that result from spontaneous decomposition of normal L-aspartyl and L-asparaginyl residues. It plays a role in the repair and/or degradation of damaged proteins. The sequence is that of Protein-L-isoaspartate O-methyltransferase 2 from Nitrosococcus oceani (strain ATCC 19707 / BCRC 17464 / JCM 30415 / NCIMB 11848 / C-107).